Here is a 376-residue protein sequence, read N- to C-terminus: Pregnancy-associated glycoprotein 2 (376 aa).

An N-terminal signal peptide occupies residues 1–15 (MKWLVLLGLVALSEC). Residues asparagine 51 and asparagine 71 are each glycosylated (N-linked (GlcNAc...) asparagine). The Peptidase A1 domain occupies 68–373 (YVGNITIGTP…DRKNRRIGLA (306 aa)). Aspartate 86 is a catalytic residue. Cysteine 99 and cysteine 104 are disulfide-bonded. Asparagine 114, asparagine 248, and asparagine 252 each carry an N-linked (GlcNAc...) asparagine glycan. An intrachain disulfide couples cysteine 258 to cysteine 262. Aspartate 267 is a catalytic residue. Cysteine 300 and cysteine 333 are oxidised to a cystine. An N-linked (GlcNAc...) asparagine glycan is attached at asparagine 343.

This sequence belongs to the peptidase A1 family. N-Glycosylated; the glycans terminate in either N-acetyl-galactosamine (GalNAc) or N-acetyllactosamine. Terminal GalNAc on Asn-linked glycans is greatly reduced prior to parturition while lactosamine-type N-glycans remain unaltered. As to expression, trophoblast and placental tissue. Localized to both the mononucleate and binucleate cells of the trophectoderm.

The protein resides in the secreted. Its subcellular location is the extracellular space. Functionally, PAG2 or a processed derivative of this molecule might represent a factor that binds the LH receptor. The sequence is that of Pregnancy-associated glycoprotein 2 (PAG2) from Bos taurus (Bovine).